We begin with the raw amino-acid sequence, 241 residues long: Small ribosomal subunit protein uS2 (241 aa).

Belongs to the universal ribosomal protein uS2 family.

In Yersinia enterocolitica serotype O:8 / biotype 1B (strain NCTC 13174 / 8081), this protein is Small ribosomal subunit protein uS2.